Reading from the N-terminus, the 264-residue chain is Thymidylate synthase (264 aa).

Arg-21 provides a ligand contact to dUMP. Position 51 (His-51) interacts with (6R)-5,10-methylene-5,6,7,8-tetrahydrofolate. 126–127 (RR) is a dUMP binding site. The active-site Nucleophile is the Cys-146. Residues 166-169 (RSCD), Asn-177, and 207-209 (HLY) contribute to the dUMP site. Residue Asp-169 participates in (6R)-5,10-methylene-5,6,7,8-tetrahydrofolate binding. Ala-263 provides a ligand contact to (6R)-5,10-methylene-5,6,7,8-tetrahydrofolate.

The protein belongs to the thymidylate synthase family. Bacterial-type ThyA subfamily. Homodimer.

It localises to the cytoplasm. It carries out the reaction dUMP + (6R)-5,10-methylene-5,6,7,8-tetrahydrofolate = 7,8-dihydrofolate + dTMP. It participates in pyrimidine metabolism; dTTP biosynthesis. Functionally, catalyzes the reductive methylation of 2'-deoxyuridine-5'-monophosphate (dUMP) to 2'-deoxythymidine-5'-monophosphate (dTMP) while utilizing 5,10-methylenetetrahydrofolate (mTHF) as the methyl donor and reductant in the reaction, yielding dihydrofolate (DHF) as a by-product. This enzymatic reaction provides an intracellular de novo source of dTMP, an essential precursor for DNA biosynthesis. The sequence is that of Thymidylate synthase from Shewanella sp. (strain MR-4).